The primary structure comprises 213 residues: Phosphatidylethanolamine N-methyltransferase A (213 aa).

Residues 1-21 are Lumenal-facing; it reads MIVEHAIDYIDYLMNYVDFTE. The helical intramembrane region spans 22-42; that stretch reads KYFLLTIACVVFNPTWWNITA. The Lumenal segment spans residues 43 to 54; the sequence is RMEYKTKFMTKI. Residues 55–75 form a helical membrane-spanning segment; sequence CGSKENGCYLLAFLIFSLGIL. Topologically, residues 76-102 are cytoplasmic; sequence RDWLFSEALIRQPIFQEFDRFEVEVLS. A helical membrane pass occupies residues 103–123; it reads YILYGFGGILVLAAYLKLGIT. 107 to 109 is an S-adenosyl-L-methionine binding site; it reads GFG. The Lumenal segment spans residues 124-166; it reads GTYLGDYFGILMKERVTGFPFNVMNNPMYNGSVMLFIAHALSY. The chain crosses the membrane as a helical span at residues 167–187; the sequence is KSVAGLVLSFVVYVVYKFALI. Residues 188 to 213 are Cytoplasmic-facing; sequence FEESFTNYIYSTAAANAAKKNKSKSK. Residue 189-190 participates in S-adenosyl-L-methionine binding; the sequence is EE.

This sequence belongs to the class VI-like SAM-binding methyltransferase superfamily. PEMT/PEM2 methyltransferase family.

The protein resides in the endoplasmic reticulum membrane. The protein localises to the mitochondrion membrane. The enzyme catalyses a 1,2-diacyl-sn-glycero-3-phospho-N-methylethanolamine + S-adenosyl-L-methionine = a 1,2-diacyl-sn-glycero-3-phospho-N,N-dimethylethanolamine + S-adenosyl-L-homocysteine + H(+). The catalysed reaction is a 1,2-diacyl-sn-glycero-3-phospho-N,N-dimethylethanolamine + S-adenosyl-L-methionine = a 1,2-diacyl-sn-glycero-3-phosphocholine + S-adenosyl-L-homocysteine + H(+). It carries out the reaction a 1,2-diacyl-sn-glycero-3-phosphoethanolamine + S-adenosyl-L-methionine = a 1,2-diacyl-sn-glycero-3-phospho-N-methylethanolamine + S-adenosyl-L-homocysteine + H(+). It functions in the pathway phospholipid metabolism; phosphatidylcholine biosynthesis. Functionally, catalyzes the three sequential steps of the methylation pathway of phosphatidylcholine biosynthesis, the SAM-dependent methylation of phosphatidylethanolamine (PE) to phosphatidylmonomethylethanolamine (PMME), PMME to phosphatidyldimethylethanolamine (PDME), and PDME to phosphatidylcholine (PC). This is Phosphatidylethanolamine N-methyltransferase A (pemtA) from Dictyostelium discoideum (Social amoeba).